The chain runs to 333 residues: Tetraacyldisaccharide 4'-kinase (333 aa).

55 to 62 (TAGGNGKT) lines the ATP pocket.

Belongs to the LpxK family.

It catalyses the reaction a lipid A disaccharide + ATP = a lipid IVA + ADP + H(+). It participates in glycolipid biosynthesis; lipid IV(A) biosynthesis; lipid IV(A) from (3R)-3-hydroxytetradecanoyl-[acyl-carrier-protein] and UDP-N-acetyl-alpha-D-glucosamine: step 6/6. Functionally, transfers the gamma-phosphate of ATP to the 4'-position of a tetraacyldisaccharide 1-phosphate intermediate (termed DS-1-P) to form tetraacyldisaccharide 1,4'-bis-phosphate (lipid IVA). In Pectobacterium carotovorum subsp. carotovorum (strain PC1), this protein is Tetraacyldisaccharide 4'-kinase.